We begin with the raw amino-acid sequence, 258 residues long: Aquaglyceroporin (258 aa).

Over 1 to 16 the chain is Cytoplasmic; the sequence is MKVTFGNEYIKNFLGE. Residues 17–37 form a helical membrane-spanning segment; sequence FIGTFVLMFLGEGTTANHFAV. The Extracellular segment spans residues 38–45; sequence PIKNDWLR. The helical transmembrane segment at 46–66 threads the bilayer; the sequence is LCIGWGLGVFFGILISAKLSG. Glycerol is bound by residues A67 and N70. Topologically, residues 67–87 are cytoplasmic; the sequence is AHLNLAVTVGLSTIKKFNYKQ. Residues 88–108 traverse the membrane as a helical segment; that stretch reads IPLYFAGQLLGALSATASVYG. Topologically, residues 109–133 are extracellular; the sequence is LYYGFVSDQTIPKFSWETGKHANVH. The helical transmembrane segment at 134–154 threads the bilayer; it reads IASAFMHEFILTGILLLIILS. The Cytoplasmic portion of the chain corresponds to 155-171; the sequence is VTDENICGKFHVLKVSS. Residues 172–192 form a helical membrane-spanning segment; sequence IVGLAIICIGISFGGNTGFAL. Residues G189, F190, N193, and R196 each contribute to the glycerol site. Residues 193–217 lie on the Extracellular side of the membrane; sequence NPSRDLGARILSAIAYGFEAFTRDK. Residues 218–238 traverse the membrane as a helical segment; it reads CYFWIPLIAPIIGSIIFCQIY. Residues 239-258 are Cytoplasmic-facing; that stretch reads DKIVAPLVVISEHDKGALEI.

It belongs to the MIP/aquaporin (TC 1.A.8) family.

It is found in the cell membrane. It carries out the reaction H2O(in) = H2O(out). It catalyses the reaction glycerol(in) = glycerol(out). The catalysed reaction is urea(in) = urea(out). Its function is as follows. Mediates water and glycerol transport across the cell membrane. Permeable to urea. Required for efficient progression of parasites through the liver stages. This chain is Aquaglyceroporin, found in Plasmodium berghei (strain Anka).